A 389-amino-acid polypeptide reads, in one-letter code: Sulfate adenylyltransferase (389 aa).

This sequence belongs to the sulfate adenylyltransferase family.

It carries out the reaction sulfate + ATP + H(+) = adenosine 5'-phosphosulfate + diphosphate. It functions in the pathway sulfur metabolism; hydrogen sulfide biosynthesis; sulfite from sulfate: step 1/3. The protein is Sulfate adenylyltransferase of Microcystis aeruginosa (strain NIES-843 / IAM M-2473).